We begin with the raw amino-acid sequence, 469 residues long: UDP-N-acetylmuramate--L-alanine ligase (469 aa).

120–126 lines the ATP pocket; that stretch reads GTHGKTT.

The protein belongs to the MurCDEF family.

It is found in the cytoplasm. It catalyses the reaction UDP-N-acetyl-alpha-D-muramate + L-alanine + ATP = UDP-N-acetyl-alpha-D-muramoyl-L-alanine + ADP + phosphate + H(+). The protein operates within cell wall biogenesis; peptidoglycan biosynthesis. Its function is as follows. Cell wall formation. This is UDP-N-acetylmuramate--L-alanine ligase from Acetivibrio thermocellus (strain ATCC 27405 / DSM 1237 / JCM 9322 / NBRC 103400 / NCIMB 10682 / NRRL B-4536 / VPI 7372) (Clostridium thermocellum).